We begin with the raw amino-acid sequence, 325 residues long: Lipid droplet-associated hydrolase (325 aa).

Ser-139 serves as the catalytic Nucleophile. Catalysis depends on charge relay system residues Asp-271 and His-300.

Belongs to the AB hydrolase superfamily. LDAH family. As to expression, present in macrophage-rich areas in atherosclerotic lesions (at protein level). Expressed in monocytes and monocyte-derived macrophages (at protein level).

Its subcellular location is the lipid droplet. It localises to the endoplasmic reticulum. The enzyme catalyses a cholesterol ester + H2O = cholesterol + a fatty acid + H(+). Its function is as follows. Probable serine lipid hydrolase associated with lipid droplets. Has low cholesterol esterase activity. Appears to lack triglyceride lipase activity. Involved in cholesterol and triglyceride homeostasis; has opposing effects, stimulating cellular triglyceride accumulation and cellular cholesterol release. Acts antagonistically with PNPLA2/ATGL in regulation of cellular lipid stores. May regulate triglyceride accumulation indirectly through stimulation of PNPLA2/ATGL ubiquitination and proteasomal degradation. Promotes microtubule-dependent lipid droplet fusion. Highly expressed in macrophage-rich areas in atherosclerotic lesions, suggesting that it could promote cholesterol ester turnover in macrophages. The protein is Lipid droplet-associated hydrolase of Homo sapiens (Human).